The following is a 599-amino-acid chain: Sulfite reductase [NADPH] flavoprotein alpha-component (599 aa).

One can recognise a Flavodoxin-like domain in the interval 64 to 202 (ITIISASQTG…AASEWRARVV (139 aa)). FMN-binding positions include 70 to 75 (SQTGNA), 117 to 120 (STQG), and 153 to 162 (LGDSSYEFFC). The FAD-binding FR-type domain maps to 234-448 (DAPLVASLSV…IEHNDNFRLP (215 aa)). Residues threonine 322, alanine 356, 386-389 (RLYS), 404-406 (TVG), tyrosine 410, and 419-422 (GGAS) each bind FAD. Residues 519-520 (SR), 525-529 (KVYVQ), and aspartate 561 each bind NADP(+). Tyrosine 599 contributes to the FAD binding site.

This sequence belongs to the NADPH-dependent sulphite reductase flavoprotein subunit CysJ family. The protein in the N-terminal section; belongs to the flavodoxin family. In the C-terminal section; belongs to the flavoprotein pyridine nucleotide cytochrome reductase family. In terms of assembly, alpha(8)-beta(8). The alpha component is a flavoprotein, the beta component is a hemoprotein. FAD serves as cofactor. Requires FMN as cofactor.

The enzyme catalyses hydrogen sulfide + 3 NADP(+) + 3 H2O = sulfite + 3 NADPH + 4 H(+). Its pathway is sulfur metabolism; hydrogen sulfide biosynthesis; hydrogen sulfide from sulfite (NADPH route): step 1/1. Its function is as follows. Component of the sulfite reductase complex that catalyzes the 6-electron reduction of sulfite to sulfide. This is one of several activities required for the biosynthesis of L-cysteine from sulfate. The flavoprotein component catalyzes the electron flow from NADPH -&gt; FAD -&gt; FMN to the hemoprotein component. This Escherichia coli O157:H7 protein is Sulfite reductase [NADPH] flavoprotein alpha-component.